A 352-amino-acid chain; its full sequence is Homocitrate synthase, omega subunit (352 aa).

Belongs to the alpha-IPM synthase/homocitrate synthase family. As to quaternary structure, heterodimer of an alpha and an omega chain.

The catalysed reaction is acetyl-CoA + 2-oxoglutarate + H2O = (2R)-homocitrate + CoA + H(+). Functionally, this protein is a Fe-Mo-cofactor biosynthetic component. In Clostridium pasteurianum, this protein is Homocitrate synthase, omega subunit (nifV-OMEGA).